We begin with the raw amino-acid sequence, 762 residues long: MPTGFQPAESFISFGQPASPPYKGNEASSSSRKGKRKASDTPAPGEKQTKKNKKDKKKKGSKKSQPVDEPDKKDGLPGLSKKQKKALKEQEHKARKSDRKRDNSRGIEAGPRNKKEEQKAAERHAPWTELVDVDLCRDPVDLLTEEINAFYKYVSPTREEFEVRLFMIELITRTINKLWPEAEVTPFGSWQTQLYLPQGDIDLVVAHKYLSDANKQRLLAELGKAMRQANITDVVAIIARARVPIIKFVTLEGKINVDISLNQANGVTAGKIINQYLDALPGARQLILIVKYFLSQRSMNEVYTGGLGSYSVICMVISFLQLHPKLRRSEINPELNLGTLLIEFFELFGRNFNYNDVGISIRRGGFYFSKASRGWMKGQSFLLSIEDPQDKDNDISGGSFGIRQVRNTLGGAYELLSMRLFERAEEMSRNARSGRRSTSWKDKEGDDWSILGGVMGITKETLKQRNELTRIHLEGRLHHKLSIPLGADPKPFVQNYRPPPIISVPSVTDHGRGASSPPPPAESSKRNKKDVGAIMVEDDELESDDDSDSDASSYSSSDSDDSDSDPVAISPRTANSRSTSRVPRADISDTESDGIIEISQPFESSGRGRKPLGDSEPSEDEIEVLSNPPEESRYAGGKGRGKAKVKDAFRPPTPPLPGQEGQLSDLSRPPTPPLPPGEEEEEIDSDEEALRRILAESDGDLGSEDEIGKEWQGAIQVDSDSDEEEKKGRKKRKRGVRSEERRAFWAAKGGNRLGQSSGDMSD.

Residues 1–123 (MPTGFQPAES…KKEEQKAAER (123 aa)) are disordered. A compositionally biased stretch (basic residues) spans 50–62 (KKNKKDKKKKGSK). Composition is skewed to basic and acidic residues over residues 65–75 (QPVDEPDKKDG) and 99–123 (RKRDNSRGIEAGPRNKKEEQKAAER). Ser-189 contacts ATP. Asp-200 and Asp-202 together coordinate Mg(2+). Positions 266, 291, 309, and 310 each coordinate ATP. The PAP-associated domain maps to 336 to 393 (NLGTLLIEFFELFGRNFNYNDVGISIRRGGFYFSKASRGWMKGQSFLLSIEDPQDKDN). Residues 482–762 (SIPLGADPKP…LGQSSGDMSD (281 aa)) form a disordered region. A compositionally biased stretch (acidic residues) spans 536-549 (VEDDELESDDDSDS). Residues 572-581 (RTANSRSTSR) show a composition bias toward polar residues. Residue Lys-610 participates in ATP binding. 2 stretches are compositionally biased toward acidic residues: residues 677-687 (GEEEEEIDSDE) and 697-707 (SDGDLGSEDEI). Residues 753–762 (LGQSSGDMSD) are compositionally biased toward polar residues.

Belongs to the DNA polymerase type-B-like family. Component of the TRAMP complex. Mg(2+) serves as cofactor. The cofactor is Mn(2+).

The protein localises to the nucleus. Its subcellular location is the nucleolus. It carries out the reaction RNA(n) + ATP = RNA(n)-3'-adenine ribonucleotide + diphosphate. Required for 3' polyadenylation of the 5.8S and 25S rRNAs as a prelude to their degradation in the exosome. Involved in the nucleolar organization to ensure faithful chromosome segregation during mitosis. The chain is Poly(A) RNA polymerase CID14 from Cryptococcus neoformans var. neoformans serotype D (strain JEC21 / ATCC MYA-565) (Filobasidiella neoformans).